Here is an 881-residue protein sequence, read N- to C-terminus: DNA mismatch repair protein MutS (881 aa).

Residue 626–633 (GPNMAGKS) participates in ATP binding.

This sequence belongs to the DNA mismatch repair MutS family.

This protein is involved in the repair of mismatches in DNA. It is possible that it carries out the mismatch recognition step. This protein has a weak ATPase activity. In Desulfosudis oleivorans (strain DSM 6200 / JCM 39069 / Hxd3) (Desulfococcus oleovorans), this protein is DNA mismatch repair protein MutS.